A 657-amino-acid polypeptide reads, in one-letter code: Cyclic-di-AMP phosphodiesterase PdeA (657 aa).

Transmembrane regions (helical) follow at residues 13 to 35 (PLYG…SWWL) and 37 to 53 (ALVV…MFYF). Positions 74–137 (RSEEEALVEM…ITGNDEKGIM (64 aa)) are PAS-like. The GGDEF domain maps to 175–303 (NKSVFAVIFL…GGDQVVIKQP (129 aa)). The DHH stretch occupies residues 342-498 (VFVMGHRYPD…IEATALLSGI (157 aa)). Positions 347, 351, 353, 422, 446, and 501 each coordinate Mn(2+). The interval 592–645 (VITLRPDKLIGISARSLGQINVQVIMEKLGGGGHLSNAATQLKDVTIAEAEKQL) is DHHA1.

This sequence belongs to the GdpP/PdeA phosphodiesterase family. Heme b serves as cofactor. It depends on Mn(2+) as a cofactor.

Its subcellular location is the cell membrane. It catalyses the reaction 3',3'-c-di-AMP + H2O = 5'-O-phosphonoadenylyl-(3'-&gt;5')-adenosine + H(+). Its function is as follows. Has phosphodiesterase (PDE) activity against cyclic-di-AMP (c-di-AMP). Overexpression decreases export of c-di-AMP, leads to slightly increased susceptibility to the antibiotic cefuroxime and somewhat slower growth in macrophages. There are at least 2 PDEs for c-di-AMP in this bacteria (this one and pgpH); this may be the major PDE for intracellular growth in host macrophages. During host infection c-di-AMP is secreted into the host cytoplasm which leads to interferon-beta production and secretion by the host. c-di-AMP is a second messenger that mediates growth, cell wall stability and virulence. May monitor cellular heme or NO levels. This is Cyclic-di-AMP phosphodiesterase PdeA from Listeria monocytogenes serotype 1/2a (strain 10403S).